Consider the following 593-residue polypeptide: ATP-dependent lipid A-core flippase (593 aa).

Transmembrane regions (helical) follow at residues 33 to 55 (YIFLSADASMIYLINPILNYGFG), 67 to 87 (ILMLMGVGMVGFIALRSVGSF), 146 to 166 (AIITVVQDGTFVIGLIVVMFV), 169 to 189 (WQLSLFLIVVGPFLGLFISII), 258 to 278 (VIQIIASLVLAFSLFTIAIFG), and 284 to 304 (GSSWLTAGSFASFFAAAAAIL). In terms of domain architecture, ABC transmembrane type-1 spans 38–319 (ADASMIYLIN…LTKVNVVIQK (282 aa)). An ABC transporter domain is found at 351–585 (VTIKDLSFAF…GGLYTGSINR (235 aa)). 383–390 (GKSGSGKT) contributes to the ATP binding site.

The protein belongs to the ABC transporter superfamily. Lipid exporter (TC 3.A.1.106) family. In terms of assembly, homodimer.

It is found in the cell membrane. The enzyme catalyses ATP + H2O + lipid A-core oligosaccharideSide 1 = ADP + phosphate + lipid A-core oligosaccharideSide 2.. Involved in lipopolysaccharide (LPS) biosynthesis. Translocates lipid A-core from the inner to the outer leaflet of the inner membrane. Transmembrane domains (TMD) form a pore in the inner membrane and the ATP-binding domain (NBD) is responsible for energy generation. This chain is ATP-dependent lipid A-core flippase, found in Francisella novicida.